We begin with the raw amino-acid sequence, 252 residues long: Imidazole glycerol phosphate synthase subunit HisF (252 aa).

Catalysis depends on residues aspartate 11 and aspartate 130.

This sequence belongs to the HisA/HisF family. In terms of assembly, heterodimer of HisH and HisF.

The protein resides in the cytoplasm. It carries out the reaction 5-[(5-phospho-1-deoxy-D-ribulos-1-ylimino)methylamino]-1-(5-phospho-beta-D-ribosyl)imidazole-4-carboxamide + L-glutamine = D-erythro-1-(imidazol-4-yl)glycerol 3-phosphate + 5-amino-1-(5-phospho-beta-D-ribosyl)imidazole-4-carboxamide + L-glutamate + H(+). It functions in the pathway amino-acid biosynthesis; L-histidine biosynthesis; L-histidine from 5-phospho-alpha-D-ribose 1-diphosphate: step 5/9. Functionally, IGPS catalyzes the conversion of PRFAR and glutamine to IGP, AICAR and glutamate. The HisF subunit catalyzes the cyclization activity that produces IGP and AICAR from PRFAR using the ammonia provided by the HisH subunit. This Staphylococcus aureus (strain USA300) protein is Imidazole glycerol phosphate synthase subunit HisF.